Reading from the N-terminus, the 307-residue chain is N-acetylmuramic acid 6-phosphate etherase (307 aa).

The 164-residue stretch at 59–222 (TTKALSQGGK…STGVMVRLGK (164 aa)) folds into the SIS domain. Catalysis depends on glutamate 87, which acts as the Proton donor. Residue glutamate 118 is part of the active site.

This sequence belongs to the GCKR-like family. MurNAc-6-P etherase subfamily. In terms of assembly, homodimer.

It carries out the reaction N-acetyl-D-muramate 6-phosphate + H2O = N-acetyl-D-glucosamine 6-phosphate + (R)-lactate. It functions in the pathway amino-sugar metabolism; N-acetylmuramate degradation. Functionally, specifically catalyzes the cleavage of the D-lactyl ether substituent of MurNAc 6-phosphate, producing GlcNAc 6-phosphate and D-lactate. The sequence is that of N-acetylmuramic acid 6-phosphate etherase from Trichodesmium erythraeum (strain IMS101).